We begin with the raw amino-acid sequence, 515 residues long: Sphingolipid 10-desaturase (515 aa).

Residues 3 to 23 form a helical membrane-spanning segment; it reads AVWALLWALQLGTLVGCALVL. The Cytochrome b5 heme-binding domain occupies 46 to 113; it reads AKPISDQKAA…DISFVFRVMH (68 aa). Heme-binding residues include His90 and His113. Residues 198–218 form a helical membrane-spanning segment; that stretch reads TWLLWNTAVLISIIALSVISM. A Histidine box-1 motif is present at residues 245-249; the sequence is HDAEH. The helical transmembrane segment at 258–278 threads the bilayer; the sequence is LNDILGWIYGTVFLGVNGAWW. The Histidine box-2 signature appears at 281-286; it reads EHREHH. The next 3 membrane-spanning stretches (helical) occupy residues 322-342, 359-379, and 382-402; these read IIHF…FIVG, PWTI…LSQT, and PIPV…QLLG. The Histidine box-3 motif lies at 447–451; that stretch reads HYSHH.

It belongs to the fatty acid desaturase type 1 family. Requires Fe(2+) as cofactor.

The protein localises to the membrane. It carries out the reaction a (4E,8E)-4-sphinga-4,8-dienine ceramide + 2 Fe(II)-[cytochrome b5] + O2 + 2 H(+) = an N-acyl-(4E,8E,10E)-sphingatrienine + 2 Fe(III)-[cytochrome b5] + 2 H2O. The protein operates within lipid metabolism; sphingolipid metabolism. Functionally, fatty acid desaturase that catalyzes the introduction of the third double bond at the Delta(10) position in d18:3Delta4,8,10 triunsaturated sphingolipid long fatty acid chains. The cytochrome b5 domain probably acts as the direct electron donor to the active site of the desaturase. In Thalassiosira pseudonana (Marine diatom), this protein is Sphingolipid 10-desaturase.